The sequence spans 1370 residues: DNA-directed RNA polymerase subunit beta (1370 aa).

The protein belongs to the RNA polymerase beta chain family. The RNAP catalytic core consists of 2 alpha, 1 beta, 1 beta' and 1 omega subunit. When a sigma factor is associated with the core the holoenzyme is formed, which can initiate transcription.

It catalyses the reaction RNA(n) + a ribonucleoside 5'-triphosphate = RNA(n+1) + diphosphate. In terms of biological role, DNA-dependent RNA polymerase catalyzes the transcription of DNA into RNA using the four ribonucleoside triphosphates as substrates. The sequence is that of DNA-directed RNA polymerase subunit beta from Delftia acidovorans (strain DSM 14801 / SPH-1).